The sequence spans 576 residues: Tudor and KH domain-containing protein homolog (576 aa).

Positions 40-60 (EEADSGGQRPASGIRGQTEEQ) are disordered. 2 consecutive KH domains span residues 65 to 127 (EVCL…RALL) and 136 to 199 (VVKV…RKML). The segment covering 209-224 (LVRSMEEVEQRREPRR) has biased composition (basic and acidic residues). The segment at 209-253 (LVRSMEEVEQRREPRRSPTNSIASSMYSSQTSLSSHTQPRDKLMA) is disordered. The span at 232–243 (SSMYSSQTSLSS) shows a compositional bias: low complexity. One can recognise a Tudor domain in the interval 310–375 (APYVGQIVAA…CELRTDFLTL (66 aa)). Residues 556 to 576 (ATDLENGNNNNASTTNGASAH) are disordered. A compositionally biased stretch (low complexity) spans 561-576 (NGNNNNASTTNGASAH).

Belongs to the Tdrkh family. In terms of assembly, interacts (via C-terminus) with AGO3 (via the N-terminal region when symmetrically methylated on arginine residues); this interaction is RNA-independent and may be required for AGO3 localization to the nuage. Interacts (via Tudor domain) with piwi (via N-terminus). Interacts with tral and me31B. As to expression, ovaries (at protein level). Expressed in the ovary and testis.

Its subcellular location is the cytoplasm. The protein localises to the nucleus. It is found in the cytoplasmic ribonucleoprotein granule. In terms of biological role, involved in the piwi-interacting RNA (piRNA) metabolic process, which mediates the repression of transposable elements during meiosis by forming complexes composed of piRNAs and Piwi proteins, and governs the methylation and subsequent repression of transposons which is essential for germline integrity. Likely to act by recruiting Piwi proteins such as AGO3 and piwi to the piRNA biogenesis machinery in the nuage. Required for the final steps of primary piRNA biogenesis by participating in the 3' end-trimming of piwi-bound intermediates into mature piRNAs. This is Tudor and KH domain-containing protein homolog from Drosophila melanogaster (Fruit fly).